Reading from the N-terminus, the 363-residue chain is Ribonuclease P protein subunit p40 (363 aa).

In terms of assembly, component of nuclear RNase P and RNase MRP ribonucleoproteins. RNase P consists of a catalytic RNA moiety and about 10 protein subunits; POP1, POP4, POP5, POP7, RPP14, RPP21, RPP25, RPP30, RPP38 and RPP40. Within the RNase P complex, POP1, POP7 and RPP25 form the 'finger' subcomplex, POP5, RPP14, RPP40 and homodimeric RPP30 form the 'palm' subcomplex, and RPP21, POP4 and RPP38 form the 'wrist' subcomplex. All subunits of the RNase P complex interact with the catalytic RNA. Several subunits of RNase P are also part of the RNase MRP complex. RNase MRP consists of a catalytic RNA moiety and about 8 protein subunits; POP1, POP7, RPP25, RPP30, RPP38, RPP40 and possibly also POP4 and POP5.

Its subcellular location is the nucleus. The protein resides in the nucleolus. Functionally, component of ribonuclease P, a ribonucleoprotein complex that generates mature tRNA molecules by cleaving their 5'-ends. Also a component of the MRP ribonuclease complex, which cleaves pre-rRNA sequences. In Mus musculus (Mouse), this protein is Ribonuclease P protein subunit p40 (Rpp40).